Consider the following 335-residue polypeptide: Phosphate acyltransferase (335 aa).

Belongs to the PlsX family. As to quaternary structure, homodimer. Probably interacts with PlsY.

It localises to the cytoplasm. The catalysed reaction is a fatty acyl-[ACP] + phosphate = an acyl phosphate + holo-[ACP]. The protein operates within lipid metabolism; phospholipid metabolism. In terms of biological role, catalyzes the reversible formation of acyl-phosphate (acyl-PO(4)) from acyl-[acyl-carrier-protein] (acyl-ACP). This enzyme utilizes acyl-ACP as fatty acyl donor, but not acyl-CoA. The polypeptide is Phosphate acyltransferase (Streptococcus uberis (strain ATCC BAA-854 / 0140J)).